The sequence spans 592 residues: Methionine--tRNA ligase (592 aa).

A 'HIGH' region motif is present at residues 12–22; the sequence is PYANGPFHVGH. Residues Cys-144, Cys-147, Cys-157, and Cys-160 each coordinate Zn(2+). The short motif at 342 to 346 is the 'KMSKS' region element; that stretch reads KMSTS. ATP is bound at residue Thr-345.

It belongs to the class-I aminoacyl-tRNA synthetase family. MetG type 1 subfamily. Monomer. It depends on Zn(2+) as a cofactor.

The protein resides in the cytoplasm. It catalyses the reaction tRNA(Met) + L-methionine + ATP = L-methionyl-tRNA(Met) + AMP + diphosphate. Functionally, is required not only for elongation of protein synthesis but also for the initiation of all mRNA translation through initiator tRNA(fMet) aminoacylation. The polypeptide is Methionine--tRNA ligase (Roseiflexus sp. (strain RS-1)).